Here is a 276-residue protein sequence, read N- to C-terminus: Rhomboid protease GlpG (276 aa).

Transmembrane regions (helical) follow at residues 96-116 (VTWLIMIACILVFVVMSIVGA), 142-162 (AFMHFSLMHILFNLLWWWYIG), 169-189 (LGSGKLIVITVISALLSGYVQ), 192-212 (FSGPWFGGLSGVVYALMGYAW), 229-249 (LIAFALIWIVAGWFDVFGMSM), and 250-270 (ANGAHIAGLAVGLAMAFADTV). The active-site Nucleophile is Ser201. Residue His254 is part of the active site.

It belongs to the peptidase S54 family.

The protein resides in the cell inner membrane. The enzyme catalyses Cleaves type-1 transmembrane domains using a catalytic dyad composed of serine and histidine that are contributed by different transmembrane domains.. In terms of biological role, rhomboid-type serine protease that catalyzes intramembrane proteolysis. In Citrobacter koseri (strain ATCC BAA-895 / CDC 4225-83 / SGSC4696), this protein is Rhomboid protease GlpG.